Reading from the N-terminus, the 361-residue chain is Aminomethyltransferase (361 aa).

The protein belongs to the GcvT family. The glycine cleavage system is composed of four proteins: P, T, L and H.

The catalysed reaction is N(6)-[(R)-S(8)-aminomethyldihydrolipoyl]-L-lysyl-[protein] + (6S)-5,6,7,8-tetrahydrofolate = N(6)-[(R)-dihydrolipoyl]-L-lysyl-[protein] + (6R)-5,10-methylene-5,6,7,8-tetrahydrofolate + NH4(+). Its function is as follows. The glycine cleavage system catalyzes the degradation of glycine. The chain is Aminomethyltransferase from Phocaeicola vulgatus (strain ATCC 8482 / DSM 1447 / JCM 5826 / CCUG 4940 / NBRC 14291 / NCTC 11154) (Bacteroides vulgatus).